The primary structure comprises 466 residues: Probable Xaa-Pro aminopeptidase pepP (466 aa).

D264, D275, E398, and E438 together coordinate Mn(2+).

This sequence belongs to the peptidase M24B family. The cofactor is Mn(2+).

The catalysed reaction is Release of any N-terminal amino acid, including proline, that is linked to proline, even from a dipeptide or tripeptide.. Catalyzes the removal of a penultimate prolyl residue from the N-termini of peptides. The chain is Probable Xaa-Pro aminopeptidase pepP (pepP) from Aspergillus clavatus (strain ATCC 1007 / CBS 513.65 / DSM 816 / NCTC 3887 / NRRL 1 / QM 1276 / 107).